We begin with the raw amino-acid sequence, 435 residues long: Serine hydroxymethyltransferase 2 (435 aa).

(6S)-5,6,7,8-tetrahydrofolate-binding positions include L135 and 139 to 141 (GHL). K244 is subject to N6-(pyridoxal phosphate)lysine. Residue E260 coordinates (6S)-5,6,7,8-tetrahydrofolate.

Belongs to the SHMT family. Homodimer. Requires pyridoxal 5'-phosphate as cofactor.

It localises to the cytoplasm. The enzyme catalyses (6R)-5,10-methylene-5,6,7,8-tetrahydrofolate + glycine + H2O = (6S)-5,6,7,8-tetrahydrofolate + L-serine. It participates in one-carbon metabolism; tetrahydrofolate interconversion. The protein operates within amino-acid biosynthesis; glycine biosynthesis; glycine from L-serine: step 1/1. In terms of biological role, catalyzes the reversible interconversion of serine and glycine with tetrahydrofolate (THF) serving as the one-carbon carrier. This reaction serves as the major source of one-carbon groups required for the biosynthesis of purines, thymidylate, methionine, and other important biomolecules. Also exhibits THF-independent aldolase activity toward beta-hydroxyamino acids, producing glycine and aldehydes, via a retro-aldol mechanism. This is Serine hydroxymethyltransferase 2 from Vibrio cholerae serotype O1 (strain ATCC 39315 / El Tor Inaba N16961).